We begin with the raw amino-acid sequence, 278 residues long: 4-deoxy-L-threo-5-hexosulose-uronate ketol-isomerase (278 aa).

Positions 196, 198, 203, and 245 each coordinate Zn(2+).

Belongs to the KduI family. Zn(2+) is required as a cofactor.

It carries out the reaction 5-dehydro-4-deoxy-D-glucuronate = 3-deoxy-D-glycero-2,5-hexodiulosonate. It functions in the pathway glycan metabolism; pectin degradation; 2-dehydro-3-deoxy-D-gluconate from pectin: step 4/5. Its function is as follows. Catalyzes the isomerization of 5-dehydro-4-deoxy-D-glucuronate to 3-deoxy-D-glycero-2,5-hexodiulosonate. In Salmonella heidelberg (strain SL476), this protein is 4-deoxy-L-threo-5-hexosulose-uronate ketol-isomerase.